Reading from the N-terminus, the 63-residue chain is MADAKTIKIEQIGSPIRRHHSQRETLIGLKLNKIGRVTELPDTPAVRGMITKVHHLVRIVDEK.

The protein belongs to the universal ribosomal protein uL30 family. In terms of assembly, part of the 50S ribosomal subunit.

This is Large ribosomal subunit protein uL30 from Bradyrhizobium sp. (strain BTAi1 / ATCC BAA-1182).